The sequence spans 1260 residues: uncharacterized protein (1260 aa).

The protein resides in the plastid. It is found in the chloroplast. This is an uncharacterized protein from Ostreococcus tauri.